We begin with the raw amino-acid sequence, 147 residues long: Small ribosomal subunit protein uS12 (147 aa).

It belongs to the universal ribosomal protein uS12 family. As to quaternary structure, part of the 30S ribosomal subunit.

Functionally, with S4 and S5 plays an important role in translational accuracy. Located at the interface of the 30S and 50S subunits. The sequence is that of Small ribosomal subunit protein uS12 from Methanococcus aeolicus (strain ATCC BAA-1280 / DSM 17508 / OCM 812 / Nankai-3).